The sequence spans 323 residues: Olfactory receptor 5P58 (323 aa).

The Extracellular segment spans residues 1-28; it reads MAFLEDGNHTAVTEFILVGLTDDPVLKV. Asn-8 carries an N-linked (GlcNAc...) asparagine glycan. The helical transmembrane segment at 29–49 threads the bilayer; the sequence is ILFTIILCIYLVTVSGNLSTI. Residues 50–57 lie on the Cytoplasmic side of the membrane; that stretch reads LLIRVSSQ. Residues 58–78 form a helical membrane-spanning segment; it reads LHHPMYFFLSHLASVDLGYSS. Residues 79 to 102 lie on the Extracellular side of the membrane; it reads SVTPNMLINFLAENNTISYIGCSI. Asn-92 is a glycosylation site (N-linked (GlcNAc...) asparagine). Residues Cys-100 and Cys-192 are joined by a disulfide bond. Residues 103 to 123 traverse the membrane as a helical segment; it reads QFGSATFFGVLECFLLAVMAY. The Cytoplasmic portion of the chain corresponds to 124–136; sequence DRFVAICNPLLYS. Residues 137–157 form a helical membrane-spanning segment; that stretch reads IKMSTQVCVKLVVGSYIGSSL. Topologically, residues 158 to 199 are extracellular; the sequence is NASFVTVSIFNLLFCGPNKINHFFCDFDPLIELSCSDVSVPV. Residues 200–220 traverse the membrane as a helical segment; it reads AVTSCSAGLITMITVFVIAVS. Over 221–240 the chain is Cytoplasmic; the sequence is YTYILITVLKMRSTEGRHKA. The helical transmembrane segment at 241 to 261 threads the bilayer; sequence FSTCTSHLTAVTLFYGTVTFI. Over 262–274 the chain is Extracellular; it reads YVMPKSNYSTDQN. A glycan (N-linked (GlcNAc...) asparagine) is linked at Asn-268. Residues 275-295 traverse the membrane as a helical segment; that stretch reads KVVSVFYMVVIPMLNPLIYSL. Residues 296 to 323 lie on the Cytoplasmic side of the membrane; sequence RNNEIKGALKRQLGKKIFSQSNILFCKS.

The protein belongs to the G-protein coupled receptor 1 family.

The protein localises to the cell membrane. In terms of biological role, potential odorant receptor. This Mus musculus (Mouse) protein is Olfactory receptor 5P58.